We begin with the raw amino-acid sequence, 287 residues long: Very long chain fatty acid elongase 4 (287 aa).

The next 3 membrane-spanning stretches (helical) occupy residues Ile33–Met53, Pro64–Val84, and Phe115–Val135. Residues His145–His149 carry the HxxHH motif motif. The active-site Nucleophile is His148. Transmembrane regions (helical) follow at residues Leu150 to Phe170, Thr172 to Met192, Ile199 to Leu219, and Leu241 to Tyr261.

It belongs to the ELO family.

The protein localises to the membrane. The catalysed reaction is a very-long-chain acyl-CoA + malonyl-CoA + H(+) = a very-long-chain 3-oxoacyl-CoA + CO2 + CoA. In terms of biological role, involved in the synthesis of fatty acids. Elongates C16:0 and C18:0 fatty acids to C26:0, with C24:0 being the main product. This Trypanosoma cruzi (strain CL Brener) protein is Very long chain fatty acid elongase 4.